A 490-amino-acid polypeptide reads, in one-letter code: GTPase Der (490 aa).

The EngA-type G 1 domain maps to 3–166; that stretch reads PVIALVGRPN…IALSEFPKDD (164 aa). GTP-binding positions include 9 to 16, 56 to 60, and 118 to 121; these read GRPNVGKS, DTGGI, and NKVD. Residues 164–191 form a disordered region; the sequence is KDDADEPEEGEEEIVAEGEEAKRIPGPS. Residues 166–181 are compositionally biased toward acidic residues; the sequence is DADEPEEGEEEIVAEG. The span at 182–191 shows a compositional bias: basic and acidic residues; it reads EEAKRIPGPS. Residues 196 to 369 enclose the EngA-type G 2 domain; sequence IKIAIIGRPN…SVQNSFKSAV (174 aa). GTP-binding positions include 202–209, 249–253, and 314–317; these read GRPNVGKS, DTAGV, and NKWD. The region spanning 370-454 is the KH-like domain; sequence TRWPTSRLTQ…PIRIEFKGGE (85 aa). A disordered region spans residues 452–490; sequence GGENPYEGNKNTLTDRQVNKKRRLMSHHKKADKKRRDKR. A compositionally biased stretch (basic residues) spans 470–490; the sequence is NKKRRLMSHHKKADKKRRDKR.

It belongs to the TRAFAC class TrmE-Era-EngA-EngB-Septin-like GTPase superfamily. EngA (Der) GTPase family. As to quaternary structure, associates with the 50S ribosomal subunit.

GTPase that plays an essential role in the late steps of ribosome biogenesis. In Pseudomonas fluorescens (strain ATCC BAA-477 / NRRL B-23932 / Pf-5), this protein is GTPase Der.